We begin with the raw amino-acid sequence, 556 residues long: 2-succinyl-5-enolpyruvyl-6-hydroxy-3-cyclohexene-1-carboxylate synthase (556 aa).

It belongs to the TPP enzyme family. MenD subfamily. Homodimer. Mg(2+) serves as cofactor. Mn(2+) is required as a cofactor. The cofactor is thiamine diphosphate.

The catalysed reaction is isochorismate + 2-oxoglutarate + H(+) = 5-enolpyruvoyl-6-hydroxy-2-succinyl-cyclohex-3-ene-1-carboxylate + CO2. Its pathway is quinol/quinone metabolism; 1,4-dihydroxy-2-naphthoate biosynthesis; 1,4-dihydroxy-2-naphthoate from chorismate: step 2/7. The protein operates within quinol/quinone metabolism; menaquinone biosynthesis. Functionally, catalyzes the thiamine diphosphate-dependent decarboxylation of 2-oxoglutarate and the subsequent addition of the resulting succinic semialdehyde-thiamine pyrophosphate anion to isochorismate to yield 2-succinyl-5-enolpyruvyl-6-hydroxy-3-cyclohexene-1-carboxylate (SEPHCHC). This is 2-succinyl-5-enolpyruvyl-6-hydroxy-3-cyclohexene-1-carboxylate synthase from Klebsiella pneumoniae subsp. pneumoniae (strain ATCC 700721 / MGH 78578).